We begin with the raw amino-acid sequence, 492 residues long: Histone-lysine N-methyltransferase SUVR4 (492 aa).

The disordered stretch occupies residues 112-138 (ETRSASSGSSIQVVQKQPQLSNGDRKR). The span at 113–133 (TRSASSGSSIQVVQKQPQLSN) shows a compositional bias: polar residues. Zn(2+) contacts are provided by cysteine 196, cysteine 197, cysteine 200, cysteine 204, cysteine 213, cysteine 281, cysteine 285, cysteine 287, and cysteine 291. Residues 196–299 (CCANCKGNCL…QCGNRVVQRG (104 aa)) form the Pre-SET domain. Residues 302–435 (CQLQVYFTQE…AMDELTWDYM (134 aa)) form the SET domain. Residues 313–315 (KGW) and 391–392 (NH) each bind S-adenosyl-L-methionine. Cysteine 394 serves as a coordination point for Zn(2+). Residue tyrosine 434 participates in S-adenosyl-L-methionine binding. The Post-SET domain occupies 446–462 (KAFRCCCGSESCRDRKI). 3 residues coordinate Zn(2+): cysteine 450, cysteine 452, and cysteine 457. Positions 463–492 (KGSQGKSIERRKIVSAKKQQGSKEVSKKRK) are disordered.

It belongs to the class V-like SAM-binding methyltransferase superfamily. Histone-lysine methyltransferase family. In terms of assembly, interacts with ubiquitin.

The protein localises to the nucleus. The protein resides in the chromosome. It catalyses the reaction N(6)-methyl-L-lysyl(9)-[histone H3] + S-adenosyl-L-methionine = N(6),N(6)-dimethyl-L-lysyl(9)-[histone H3] + S-adenosyl-L-homocysteine + H(+). The catalysed reaction is N(6),N(6)-dimethyl-L-lysyl(9)-[histone H3] + S-adenosyl-L-methionine = N(6),N(6),N(6)-trimethyl-L-lysyl(9)-[histone H3] + S-adenosyl-L-homocysteine + H(+). Its function is as follows. Histone methyltransferase that converts monomethylated 'Lys-9' of histone H3 (H3K9me1) to dimethylated 'Lys-9' (H3K9me2) in the absence of bound ubiquitin, and to trimethylated 'Lys-9' (H3K9me3) in the presence of bound ubiquitin. Acts in a locus-specific manner and contributes to the transcriptional silencing of pseudogenes and transposons. H3 'Lys-9' methylation represents a specific tag for epigenetic transcriptional repression. This chain is Histone-lysine N-methyltransferase SUVR4 (SUVR4), found in Arabidopsis thaliana (Mouse-ear cress).